The chain runs to 463 residues: Type IV secretion system protein PtlD (463 aa).

The N-terminal stretch at 1 to 24 is a signal peptide; sequence MAGLSRILLSCTLACLLAGQAAQA. The next 5 membrane-spanning stretches (helical) occupy residues 118 to 138, 232 to 252, 253 to 273, 294 to 314, and 333 to 353; these read LQPLVYSMMTLLVLLTGYALL, WLLCAMIVAASAGGWLCLAAS, LLIVPGLIVTLLLSLGPLFLV, ALVFMALGTPAVGLLSDVLAG, and MLAATLCATATLMLLTLVPLA. Low complexity predominate over residues 376-410; the sequence is AHRQAAARQYAPRPAAAAAAAGPHQAGTYAASATP. The segment at 376–463 is disordered; it reads AHRQAAARQY…RVLPRKPNLP (88 aa). Over residues 411–420 the composition is skewed to pro residues; that stretch reads APAPARPAPS. Residues 441 to 455 show a composition bias toward basic and acidic residues; it reads VRRDDRPAPAPDRRV.

It is found in the cell membrane. In terms of biological role, component of the type IV secretion system ptl required for secretion of assembled pertussis toxin (PTX) through the outer membrane. This Bordetella pertussis (strain Tohama I / ATCC BAA-589 / NCTC 13251) protein is Type IV secretion system protein PtlD (ptlD).